A 379-amino-acid polypeptide reads, in one-letter code: Tryptophan 2,3-dioxygenase (379 aa).

Residues F57–H61 and R128 contribute to the substrate site. H312 serves as a coordination point for heme. Substrate is bound at residue T327.

It belongs to the tryptophan 2,3-dioxygenase family. As to quaternary structure, homotetramer. Dimer of dimers. The cofactor is heme.

It carries out the reaction L-tryptophan + O2 = N-formyl-L-kynurenine. Its pathway is amino-acid degradation; L-tryptophan degradation via kynurenine pathway; L-kynurenine from L-tryptophan: step 1/2. It functions in the pathway pigment biosynthesis; ommochrome biosynthesis. Its function is as follows. Heme-dependent dioxygenase that catalyzes the oxidative cleavage of the L-tryptophan (L-Trp) pyrrole ring and converts L-tryptophan to N-formyl-L-kynurenine. Catalyzes the oxidative cleavage of the indole moiety. Required during larval growth to control the level of potentially harmful free tryptophan in the hemolymph. In the adult the same reaction is the first step in the ommochrome biosynthetic pathway. The protein is Tryptophan 2,3-dioxygenase of Drosophila melanogaster (Fruit fly).